Reading from the N-terminus, the 61-residue chain is uncharacterized protein (61 aa).

Positions 34–61 form a coiled coil; the sequence is TDVEDIDRLISMLDDLEAKYERFKKDWE.

This is an uncharacterized protein from Bacillus subtilis (strain 168).